A 356-amino-acid polypeptide reads, in one-letter code: Phosphate acyltransferase (356 aa).

The protein belongs to the PlsX family. As to quaternary structure, homodimer. Probably interacts with PlsY.

It is found in the cytoplasm. It catalyses the reaction a fatty acyl-[ACP] + phosphate = an acyl phosphate + holo-[ACP]. Its pathway is lipid metabolism; phospholipid metabolism. In terms of biological role, catalyzes the reversible formation of acyl-phosphate (acyl-PO(4)) from acyl-[acyl-carrier-protein] (acyl-ACP). This enzyme utilizes acyl-ACP as fatty acyl donor, but not acyl-CoA. This chain is Phosphate acyltransferase, found in Bartonella bacilliformis (strain ATCC 35685 / KC583 / Herrer 020/F12,63).